The primary structure comprises 95 residues: Aspartyl/glutamyl-tRNA(Asn/Gln) amidotransferase subunit C (95 aa).

Belongs to the GatC family. As to quaternary structure, heterotrimer of A, B and C subunits.

It catalyses the reaction L-glutamyl-tRNA(Gln) + L-glutamine + ATP + H2O = L-glutaminyl-tRNA(Gln) + L-glutamate + ADP + phosphate + H(+). The catalysed reaction is L-aspartyl-tRNA(Asn) + L-glutamine + ATP + H2O = L-asparaginyl-tRNA(Asn) + L-glutamate + ADP + phosphate + 2 H(+). Allows the formation of correctly charged Asn-tRNA(Asn) or Gln-tRNA(Gln) through the transamidation of misacylated Asp-tRNA(Asn) or Glu-tRNA(Gln) in organisms which lack either or both of asparaginyl-tRNA or glutaminyl-tRNA synthetases. The reaction takes place in the presence of glutamine and ATP through an activated phospho-Asp-tRNA(Asn) or phospho-Glu-tRNA(Gln). This is Aspartyl/glutamyl-tRNA(Asn/Gln) amidotransferase subunit C from Chlorobaculum parvum (strain DSM 263 / NCIMB 8327) (Chlorobium vibrioforme subsp. thiosulfatophilum).